The chain runs to 489 residues: Bifunctional protein HldE (489 aa).

The ribokinase stretch occupies residues 1–328 (METENIHSFD…ELKAQLQDQP (328 aa)). 206 to 209 (NKKE) provides a ligand contact to ATP. Aspartate 276 is an active-site residue. The interval 357 to 489 (LTNGCFDLLH…IIQDIRNGRG (133 aa)) is cytidylyltransferase.

In the N-terminal section; belongs to the carbohydrate kinase PfkB family. This sequence in the C-terminal section; belongs to the cytidylyltransferase family. As to quaternary structure, homodimer.

It catalyses the reaction D-glycero-beta-D-manno-heptose 7-phosphate + ATP = D-glycero-beta-D-manno-heptose 1,7-bisphosphate + ADP + H(+). The catalysed reaction is D-glycero-beta-D-manno-heptose 1-phosphate + ATP + H(+) = ADP-D-glycero-beta-D-manno-heptose + diphosphate. The protein operates within nucleotide-sugar biosynthesis; ADP-L-glycero-beta-D-manno-heptose biosynthesis; ADP-L-glycero-beta-D-manno-heptose from D-glycero-beta-D-manno-heptose 7-phosphate: step 1/4. It participates in nucleotide-sugar biosynthesis; ADP-L-glycero-beta-D-manno-heptose biosynthesis; ADP-L-glycero-beta-D-manno-heptose from D-glycero-beta-D-manno-heptose 7-phosphate: step 3/4. Functionally, catalyzes the phosphorylation of D-glycero-D-manno-heptose 7-phosphate at the C-1 position to selectively form D-glycero-beta-D-manno-heptose-1,7-bisphosphate. In terms of biological role, catalyzes the ADP transfer from ATP to D-glycero-beta-D-manno-heptose 1-phosphate, yielding ADP-D-glycero-beta-D-manno-heptose. This Desulfatibacillum aliphaticivorans protein is Bifunctional protein HldE.